Here is a 131-residue protein sequence, read N- to C-terminus: SPbeta prophage-derived UPF0715 membrane protein YopD (131 aa).

The next 4 membrane-spanning stretches (helical) occupy residues 12-32, 38-58, 75-95, and 108-128; these read VYTLAFSSLSFGLIFGLYLFV, AIALVTIAIIAFYALITYLVF, LINFLIYIAVAFSAVFLFWFV, and FEYYIMSIVAAFIYWFWDSIF.

This sequence belongs to the UPF0715 family.

It is found in the cell membrane. The chain is SPbeta prophage-derived UPF0715 membrane protein YopD (yopD) from Bacillus subtilis (strain 168).